The primary structure comprises 448 residues: Protein kinase C and casein kinase substrate in neurons protein 2 (448 aa).

Residues 11-282 form the F-BAR domain; the sequence is VEVSSDSFWE…NIKTADAVED (272 aa). A coiled-coil region spans residues 25–274; sequence KRTVKRIDDG…NIYRELEQNI (250 aa). The interval 315 to 386 is disordered; it reads SRREKKKASD…DTNPFDEDTS (72 aa). Polar residues predominate over residues 329–358; sequence TGINQTGDQVSQPNKHSSVSSYEKNQSYPT. An NPF1 motif is present at residues 367–369; sequence NPF. An NPF2 motif is present at residues 379–381; sequence NPF. Positions 388–448 constitute an SH3 domain; it reads VMEVRVRALY…YPANYVEPIQ (61 aa).

The protein belongs to the PACSIN family. In terms of processing, phosphorylated on serine residues. Detected in intestine, cardiac muscle, lung and brain (at protein level). Expressed in all tissues tested, including, gizzard, liver, cardiac muscle, skeletal muscle and skin.

It is found in the cytoplasm. The protein localises to the cytoskeleton. It localises to the cytoplasmic vesicle membrane. The protein resides in the cell projection. Its subcellular location is the ruffle membrane. It is found in the early endosome. The protein localises to the recycling endosome membrane. It localises to the cell membrane. The protein resides in the membrane. Its subcellular location is the caveola. It is found in the cell junction. The protein localises to the focal adhesion. Its function is as follows. Regulates the morphogenesis and endocytosis of caveolae. Lipid-binding protein that is able to promote the tubulation of the phosphatidic acid-containing membranes it preferentially binds. Plays a role in intracellular vesicle-mediated transport. Involved in the endocytosis of cell-surface receptors like the EGF receptor, contributing to its internalization in the absence of EGF stimulus. Essential for endothelial organization in sprouting angiogenesis, modulates CDH5-based junctions. Facilitates endothelial front-rear polarity during migration by recruiting EHD4 and MICALL1 to asymmetric adherens junctions between leader and follower cells. The chain is Protein kinase C and casein kinase substrate in neurons protein 2 (PACSIN2) from Gallus gallus (Chicken).